The sequence spans 62 residues: uncharacterized protein (62 aa).

This is an uncharacterized protein from Escherichia coli (strain K12).